A 466-amino-acid chain; its full sequence is 3-isopropylmalate dehydratase large subunit (466 aa).

[4Fe-4S] cluster-binding residues include cysteine 347, cysteine 407, and cysteine 410.

The protein belongs to the aconitase/IPM isomerase family. LeuC type 1 subfamily. Heterodimer of LeuC and LeuD. [4Fe-4S] cluster is required as a cofactor.

It catalyses the reaction (2R,3S)-3-isopropylmalate = (2S)-2-isopropylmalate. It participates in amino-acid biosynthesis; L-leucine biosynthesis; L-leucine from 3-methyl-2-oxobutanoate: step 2/4. Catalyzes the isomerization between 2-isopropylmalate and 3-isopropylmalate, via the formation of 2-isopropylmaleate. This Escherichia coli O157:H7 protein is 3-isopropylmalate dehydratase large subunit.